A 337-amino-acid polypeptide reads, in one-letter code: Nucleotide sugar transporter SLC35D2 (337 aa).

At 1–27 (MTAGGQAEAEGAGGEPGAARLPSRVAR) the chain is on the cytoplasmic side. Residues 28-48 (LLSALFYGTCSFLIVLVNKAL) form a helical membrane-spanning segment. At 49-53 (LTTYG) the chain is on the extracellular side. The helical transmembrane segment at 54-74 (FPSPIFLGIGQMAATIMILYV) threads the bilayer. Topologically, residues 75–146 (SKLNKIIHFP…IILGKQYSLN (72 aa)) are cytoplasmic. Transmembrane regions (helical) follow at residues 147-167 (IILS…SDLA) and 168-188 (FNLE…ANGV). At 189 to 201 (YTKQKMDPKELGK) the chain is on the cytoplasmic side. A helical membrane pass occupies residues 202 to 222 (YGVLFYNACFMIIPTLIISVS). The Extracellular segment spans residues 223–237 (TGDLQQATEFNQWKN). Residues 238–258 (VVFILQFLLSCFLGFLLMYST) form a helical membrane-spanning segment. The Cytoplasmic segment spans residues 259–265 (VLCSYYN). A helical transmembrane segment spans residues 266–288 (SALTTAVVGAIKNVSVAYIGILI). The Extracellular segment spans residues 289–292 (GGDY). Residues 293-315 (IFSLLNFVGLNICMAGGLRYSFL) traverse the membrane as a helical segment. Topologically, residues 316–337 (TLSSQLKPKPVGEENICLDLKS) are cytoplasmic.

The protein belongs to the TPT transporter family. SLC35D subfamily. As to expression, highly expressed in heart, kidney, small intestine, placenta, lung and peripheral blood leukocyte. Weakly expressed in skeletal muscle and spleen. Not expressed in brain, colon and thymus.

It localises to the golgi apparatus membrane. It catalyses the reaction UMP(out) + UDP-N-acetyl-alpha-D-glucosamine(in) = UMP(in) + UDP-N-acetyl-alpha-D-glucosamine(out). It carries out the reaction UMP(out) + UDP-alpha-D-glucose(in) = UMP(in) + UDP-alpha-D-glucose(out). In terms of biological role, nucleotide sugar antiporter transporting UDP-N-acetylglucosamine (UDP-GlcNAc) and UDP-glucose (UDP-Glc) from the cytosol into the lumen of the Golgi in exchange of UMP. By supplying UDP-N-acetylglucosamine, a donor substrate to heparan sulfate synthases, probably takes part in the synthesis of these glycoconjugates. The chain is Nucleotide sugar transporter SLC35D2 from Homo sapiens (Human).